A 523-amino-acid polypeptide reads, in one-letter code: NADP-specific glutamate dehydrogenase (523 aa).

The tract at residues 26–50 (CARGRSAKRDVAAKRLRSRSPRMDA) is disordered. The active site involves K202.

Belongs to the Glu/Leu/Phe/Val dehydrogenases family. In terms of assembly, homo- and heterohexamer of alpha and beta subunits. Both subunits are encoded by the same gene. Post-translationally, the N-termini of the alpha and the beta chains are blocked.

The protein localises to the plastid. It localises to the chloroplast. It catalyses the reaction L-glutamate + NADP(+) + H2O = 2-oxoglutarate + NH4(+) + NADPH + H(+). The polypeptide is NADP-specific glutamate dehydrogenase (Chlorella sorokiniana (Freshwater green alga)).